Reading from the N-terminus, the 286-residue chain is Polyamine aminopropyltransferase (286 aa).

The 234-residue stretch at 5-238 (TMWHETLHDQ…GIMTFAWATD (234 aa)) folds into the PABS domain. S-methyl-5'-thioadenosine is bound at residue glutamine 33. Spermidine contacts are provided by histidine 64 and aspartate 88. S-methyl-5'-thioadenosine is bound by residues glutamate 108 and 140–141 (DG). Catalysis depends on aspartate 158, which acts as the Proton acceptor. Residue 158-161 (DCTD) coordinates spermidine. Proline 165 is a binding site for S-methyl-5'-thioadenosine.

This sequence belongs to the spermidine/spermine synthase family. Homodimer or homotetramer.

Its subcellular location is the cytoplasm. It catalyses the reaction S-adenosyl 3-(methylsulfanyl)propylamine + putrescine = S-methyl-5'-thioadenosine + spermidine + H(+). It functions in the pathway amine and polyamine biosynthesis; spermidine biosynthesis; spermidine from putrescine: step 1/1. Catalyzes the irreversible transfer of a propylamine group from the amino donor S-adenosylmethioninamine (decarboxy-AdoMet) to putrescine (1,4-diaminobutane) to yield spermidine. The polypeptide is Polyamine aminopropyltransferase (Salmonella schwarzengrund (strain CVM19633)).